Here is a 398-residue protein sequence, read N- to C-terminus: Phosphoglycerate kinase (398 aa).

Residues 21–23 (DFN), Arg-36, 59–62 (HLGR), Arg-119, and Arg-157 contribute to the substrate site. Residues Lys-208, Gly-296, Glu-327, and 354–357 (GGDS) contribute to the ATP site.

This sequence belongs to the phosphoglycerate kinase family. As to quaternary structure, monomer.

It localises to the cytoplasm. It carries out the reaction (2R)-3-phosphoglycerate + ATP = (2R)-3-phospho-glyceroyl phosphate + ADP. Its pathway is carbohydrate degradation; glycolysis; pyruvate from D-glyceraldehyde 3-phosphate: step 2/5. This chain is Phosphoglycerate kinase, found in Streptococcus pneumoniae (strain 70585).